The sequence spans 308 residues: Ribonuclease HIII (308 aa).

In terms of domain architecture, RNase H type-2 spans 91 to 308; sequence KNVIGSDEVG…TEKALKMVKK (218 aa). Asp97, Glu98, and Asp202 together coordinate a divalent metal cation.

Belongs to the RNase HII family. RnhC subfamily. It depends on Mn(2+) as a cofactor. Mg(2+) is required as a cofactor.

The protein resides in the cytoplasm. The catalysed reaction is Endonucleolytic cleavage to 5'-phosphomonoester.. Functionally, endonuclease that specifically degrades the RNA of RNA-DNA hybrids. This is Ribonuclease HIII from Listeria monocytogenes serotype 4b (strain CLIP80459).